The sequence spans 75 residues: Small ribosomal subunit protein bS18 (75 aa).

This sequence belongs to the bacterial ribosomal protein bS18 family. As to quaternary structure, part of the 30S ribosomal subunit. Forms a tight heterodimer with protein bS6.

Functionally, binds as a heterodimer with protein bS6 to the central domain of the 16S rRNA, where it helps stabilize the platform of the 30S subunit. The protein is Small ribosomal subunit protein bS18 of Mycoplasma capricolum subsp. capricolum (strain California kid / ATCC 27343 / NCTC 10154).